Consider the following 200-residue polypeptide: Adenylyl-sulfate kinase (200 aa).

35–42 (GLPASGKS) is an ATP binding site. The active-site Phosphoserine intermediate is the serine 109.

It belongs to the APS kinase family.

It carries out the reaction adenosine 5'-phosphosulfate + ATP = 3'-phosphoadenylyl sulfate + ADP + H(+). The protein operates within sulfur metabolism; hydrogen sulfide biosynthesis; sulfite from sulfate: step 2/3. Its function is as follows. Catalyzes the synthesis of activated sulfate. This chain is Adenylyl-sulfate kinase, found in Thermodesulfovibrio yellowstonii (strain ATCC 51303 / DSM 11347 / YP87).